Consider the following 86-residue polypeptide: Toxin Aam2 (86 aa).

A signal peptide spans 1 to 20; the sequence is MNYLITISLALLLMTGVASG. In terms of domain architecture, LCN-type CS-alpha/beta spans 22-84; the sequence is RDGYIADAGN…VPIKVPGKCN (63 aa). Intrachain disulfides connect Cys32-Cys83, Cys36-Cys56, Cys42-Cys66, and Cys46-Cys68. Position 84 is an asparagine amide (Asn84).

The protein belongs to the long (4 C-C) scorpion toxin superfamily. Sodium channel inhibitor family. Alpha subfamily. As to expression, expressed by the venom gland.

It is found in the secreted. Its function is as follows. Alpha toxins bind voltage-independently at site-3 of sodium channels (Nav) and inhibit the inactivation of the activated channels, thereby blocking neuronal transmission. The chain is Toxin Aam2 from Androctonus amoreuxi (African fattail scorpion).